Here is a 49-residue protein sequence, read N- to C-terminus: MGKRKANHTISGMNAASAQGQGAGYNEEFANENLTAAERQNNKKRKKNQ.

The interval 1–49 (MGKRKANHTISGMNAASAQGQGAGYNEEFANENLTAAERQNNKKRKKNQ) is disordered. Over residues 8–20 (HTISGMNAASAQG) the composition is skewed to polar residues.

The protein belongs to the SspO family.

It is found in the spore core. This Bacillus cereus (strain AH187) protein is Small, acid-soluble spore protein O.